Here is a 106-residue protein sequence, read N- to C-terminus: Urease subunit beta (106 aa).

This sequence belongs to the urease beta subunit family. In terms of assembly, heterotrimer of UreA (gamma), UreB (beta) and UreC (alpha) subunits. Three heterotrimers associate to form the active enzyme.

The protein localises to the cytoplasm. The enzyme catalyses urea + 2 H2O + H(+) = hydrogencarbonate + 2 NH4(+). Its pathway is nitrogen metabolism; urea degradation; CO(2) and NH(3) from urea (urease route): step 1/1. This is Urease subunit beta from Prochlorococcus marinus subsp. pastoris (strain CCMP1986 / NIES-2087 / MED4).